The primary structure comprises 33 residues: Photosystem II reaction center protein T (33 aa).

The chain crosses the membrane as a helical span at residues 3–23 (ALVYTFLLVSTLGIIFFAIFF).

It belongs to the PsbT family. As to quaternary structure, PSII is composed of 1 copy each of membrane proteins PsbA, PsbB, PsbC, PsbD, PsbE, PsbF, PsbH, PsbI, PsbJ, PsbK, PsbL, PsbM, PsbT, PsbY, PsbZ, Psb30/Ycf12, at least 3 peripheral proteins of the oxygen-evolving complex and a large number of cofactors. It forms dimeric complexes.

Its subcellular location is the plastid. The protein localises to the chloroplast thylakoid membrane. In terms of biological role, found at the monomer-monomer interface of the photosystem II (PS II) dimer, plays a role in assembly and dimerization of PSII. PSII is a light-driven water plastoquinone oxidoreductase, using light energy to abstract electrons from H(2)O, generating a proton gradient subsequently used for ATP formation. In Asparagus officinalis (Garden asparagus), this protein is Photosystem II reaction center protein T.